The sequence spans 449 residues: Allantoinase (449 aa).

Residues histidine 59, histidine 61, lysine 146, histidine 182, histidine 238, and aspartate 311 each contribute to the Zn(2+) site. Position 146 is an N6-carboxylysine (lysine 146).

The protein belongs to the metallo-dependent hydrolases superfamily. Allantoinase family. In terms of assembly, homotetramer. Zn(2+) serves as cofactor. Carboxylation allows a single lysine to coordinate two zinc ions.

The catalysed reaction is (S)-allantoin + H2O = allantoate + H(+). It functions in the pathway nitrogen metabolism; (S)-allantoin degradation; allantoate from (S)-allantoin: step 1/1. Its function is as follows. Catalyzes the conversion of allantoin (5-ureidohydantoin) to allantoic acid by hydrolytic cleavage of the five-member hydantoin ring. The polypeptide is Allantoinase (Deinococcus geothermalis (strain DSM 11300 / CIP 105573 / AG-3a)).